Here is a 242-residue protein sequence, read N- to C-terminus: Uridylate kinase (242 aa).

16–19 is an ATP binding site; the sequence is KVSG. Gly-58 provides a ligand contact to UMP. The ATP site is built by Gly-59 and Arg-63. UMP contacts are provided by residues Asp-78 and 139–146; that span reads TGNPFCTT. Thr-166, Gln-167, Tyr-172, and Asp-175 together coordinate ATP.

The protein belongs to the UMP kinase family. Homohexamer.

It is found in the cytoplasm. The catalysed reaction is UMP + ATP = UDP + ADP. It participates in pyrimidine metabolism; CTP biosynthesis via de novo pathway; UDP from UMP (UMPK route): step 1/1. Inhibited by UTP. Its function is as follows. Catalyzes the reversible phosphorylation of UMP to UDP. The chain is Uridylate kinase from Rickettsia felis (strain ATCC VR-1525 / URRWXCal2) (Rickettsia azadi).